The chain runs to 343 residues: DNA repair and recombination protein RadA (343 aa).

ATP is bound at residue 107-114; the sequence is GEFGAGKS.

The protein belongs to the eukaryotic RecA-like protein family.

In terms of biological role, involved in DNA repair and in homologous recombination. Binds and assemble on single-stranded DNA to form a nucleoprotein filament. Hydrolyzes ATP in a ssDNA-dependent manner and promotes DNA strand exchange between homologous DNA molecules. The protein is DNA repair and recombination protein RadA of Haloquadratum walsbyi (strain DSM 16790 / HBSQ001).